A 145-amino-acid polypeptide reads, in one-letter code: Large ribosomal subunit protein uL11 (145 aa).

The protein belongs to the universal ribosomal protein uL11 family. As to quaternary structure, part of the ribosomal stalk of the 50S ribosomal subunit. Interacts with L10 and the large rRNA to form the base of the stalk. L10 forms an elongated spine to which L12 dimers bind in a sequential fashion forming a multimeric L10(L12)X complex. One or more lysine residues are methylated.

In terms of biological role, forms part of the ribosomal stalk which helps the ribosome interact with GTP-bound translation factors. This Coxiella burnetii (strain Dugway 5J108-111) protein is Large ribosomal subunit protein uL11.